The following is a 297-amino-acid chain: MEHEYQRAVTRVCVQTALLLLQHGAESTVVVQMAQRLGVALGVESVECALTANAVVLTTLSDNHCITTARKNTDKGINMQMVTDVQRIVIAVEHHLYELEIAQRKLDQLKPLKYNRWLVVFMIGLSCAAFAHLSSGDWIICGITIFMLKLLYDMLFAAIPAVGFALVFNVPPKALKYCAILAALGHVTRTLLLHINMPIVFATFFATCVIGFLGVHLSHRYLAHPKAFTVAAIIPMIPGVHAYKAMISMVQIHHFGFSDALFEQMISSFINTSFILGAIVFGLALPGLLFYRQKPVV.

The next 5 membrane-spanning stretches (helical) occupy residues 114 to 136 (YNRWLVVFMIGLSCAAFAHLSSG), 150 to 170 (LLYDMLFAAIPAVGFALVFNV), 197 to 217 (MPIVFATFFATCVIGFLGVHL), 227 to 247 (AFTVAAIIPMIPGVHAYKAMI), and 269 to 289 (FINTSFILGAIVFGLALPGLL).

It belongs to the ThrE exporter (TC 2.A.79) family.

The protein resides in the cell inner membrane. This is an uncharacterized protein from Haemophilus influenzae (strain ATCC 51907 / DSM 11121 / KW20 / Rd).